The primary structure comprises 218 residues: GEM-like protein 6 (218 aa).

Positions 96–174 constitute a GRAM domain; that stretch reads KIYKRLFKVC…CKINGVNQSQ (79 aa).

This sequence belongs to the GEM family.

The chain is GEM-like protein 6 from Arabidopsis thaliana (Mouse-ear cress).